A 284-amino-acid polypeptide reads, in one-letter code: 2-dehydro-3-deoxyphosphooctonate aldolase (284 aa).

It belongs to the KdsA family.

It localises to the cytoplasm. It carries out the reaction D-arabinose 5-phosphate + phosphoenolpyruvate + H2O = 3-deoxy-alpha-D-manno-2-octulosonate-8-phosphate + phosphate. It functions in the pathway carbohydrate biosynthesis; 3-deoxy-D-manno-octulosonate biosynthesis; 3-deoxy-D-manno-octulosonate from D-ribulose 5-phosphate: step 2/3. Its pathway is bacterial outer membrane biogenesis; lipopolysaccharide biosynthesis. The protein is 2-dehydro-3-deoxyphosphooctonate aldolase of Vibrio atlanticus (strain LGP32) (Vibrio splendidus (strain Mel32)).